The sequence spans 385 residues: A-type ATP synthase subunit C (385 aa).

The protein belongs to the V-ATPase V0D/AC39 subunit family. In terms of assembly, has multiple subunits with at least A(3), B(3), C, D, E, F, H, I and proteolipid K(x).

Its subcellular location is the cell membrane. Its function is as follows. Component of the A-type ATP synthase that produces ATP from ADP in the presence of a proton gradient across the membrane. The sequence is that of A-type ATP synthase subunit C from Methanothermobacter thermautotrophicus (strain ATCC 29096 / DSM 1053 / JCM 10044 / NBRC 100330 / Delta H) (Methanobacterium thermoautotrophicum).